Reading from the N-terminus, the 456-residue chain is Bestrophin homolog 18 (456 aa).

4 helical membrane-spanning segments follow: residues 29-49 (WSAIWIQYSVWLGLYFLVSAI), 83-103 (GFFIAGVLRRFWYLYDIIGFI), 234-254 (IIYPTIVCLAVHMYFFVGILA), and 267-287 (MIDLVFPFMTSIQFVFYMGWL). Positions 416 to 456 (ASSSRSLERQRSPGSFRMETLTPGSPTNTPIEPIDKIDKKK) are disordered.

Belongs to the anion channel-forming bestrophin (TC 1.A.46) family. Calcium-sensitive chloride channel subfamily. Forms oligomers.

Its subcellular location is the cell membrane. Functionally, forms chloride channels. This Caenorhabditis elegans protein is Bestrophin homolog 18 (best-18).